We begin with the raw amino-acid sequence, 445 residues long: Inositol-pentakisphosphate 2-kinase IPK1 (445 aa).

Residues 19 to 22 and arginine 40 contribute to the ATP site; that span reads GAAN. Position 127 (arginine 127) interacts with substrate. ATP-binding positions include 144-146 and 162-164; these read SDH and EIK. The EXKPK motif motif lies at 162-166; sequence EIKAK. The substrate site is built by lysine 166, lysine 196, and asparagine 234. Position 237 (arginine 237) interacts with ATP. 4 residues coordinate Zn(2+): histidine 312, cysteine 322, cysteine 325, and histidine 341. A substrate-binding site is contributed by aspartate 363. ATP is bound at residue aspartate 402. Residues lysine 406, lysine 410, and tyrosine 414 each contribute to the substrate site.

Belongs to the IPK1 type 2 family. Zn(2+) serves as cofactor.

It carries out the reaction 1D-myo-inositol 1,3,4,5,6-pentakisphosphate + ATP = 1D-myo-inositol hexakisphosphate + ADP + H(+). Functionally, phosphorylates Ins(1,3,4,5,6)P5 at position 2 to form Ins(1,2,3,4,5,6)P6 (InsP6 or phytate). Phytate is a regulator of intracellular signaling, a highly abundant animal antinutrient, and a phosphate store in plant seeds. Also phosphorylates Ins(1,3,4,6)P4 and Ins(1,4,5,6)P4 to produce Ins(1,2,3,4,6)P5 and Ins(1,2,4,5,6)P5. The protein is Inositol-pentakisphosphate 2-kinase IPK1 of Oryza sativa subsp. indica (Rice).